Here is a 130-residue protein sequence, read N- to C-terminus: MPRDFPRTRRVGEQIQRELAELIRDELRDPRLGMVTVSEVTVSRDLAHAKVFVTALGGSDEDNAKTVEVLTRAAGYLRKLLGQRLRIRQVPALHFQHDTAFDRGDRLSRLIDEAVEEDRQQHDDDKPDNG.

This sequence belongs to the RbfA family. In terms of assembly, monomer. Binds 30S ribosomal subunits, but not 50S ribosomal subunits or 70S ribosomes.

Its subcellular location is the cytoplasm. In terms of biological role, one of several proteins that assist in the late maturation steps of the functional core of the 30S ribosomal subunit. Associates with free 30S ribosomal subunits (but not with 30S subunits that are part of 70S ribosomes or polysomes). Required for efficient processing of 16S rRNA. May interact with the 5'-terminal helix region of 16S rRNA. The sequence is that of Ribosome-binding factor A from Alkalilimnicola ehrlichii (strain ATCC BAA-1101 / DSM 17681 / MLHE-1).